A 258-amino-acid chain; its full sequence is L-aspartate dehydrogenase 1 (258 aa).

The NAD(+) site is built by alanine 121 and asparagine 181. Histidine 211 is a catalytic residue.

Belongs to the L-aspartate dehydrogenase family.

The enzyme catalyses L-aspartate + NADP(+) + H2O = oxaloacetate + NH4(+) + NADPH + H(+). It carries out the reaction L-aspartate + NAD(+) + H2O = oxaloacetate + NH4(+) + NADH + H(+). The protein operates within cofactor biosynthesis; NAD(+) biosynthesis; iminoaspartate from L-aspartate (dehydrogenase route): step 1/1. In terms of biological role, specifically catalyzes the NAD or NADP-dependent dehydrogenation of L-aspartate to iminoaspartate. The protein is L-aspartate dehydrogenase 1 of Bordetella parapertussis (strain 12822 / ATCC BAA-587 / NCTC 13253).